The sequence spans 137 residues: MKTFVLVSCLLVFTQIIYAVDIKELKIMNRILEKCIRTVPKGENDPINPLKNVNVLYCAFSKRGIFTPKGVNTKQYINYCEKTIINPADIKQCKKLISKCIKKVYDRPGPIIERSKNLLSCVLKKGVLELTVYGKKK.

The N-terminal stretch at 1–19 (MKTFVLVSCLLVFTQIIYA) is a signal peptide.

It belongs to the ant venom allergen 2/4 family. In terms of assembly, monomer. In terms of tissue distribution, expressed by the venom gland.

The protein localises to the secreted. The sequence is that of Venom allergen 4 from Solenopsis geminata (Tropical fire ant).